The chain runs to 269 residues: Formamidopyrimidine-DNA glycosylase (269 aa).

The Schiff-base intermediate with DNA role is filled by proline 2. Glutamate 3 serves as the catalytic Proton donor. Lysine 57 acts as the Proton donor; for beta-elimination activity in catalysis. DNA-binding residues include histidine 90, arginine 109, and lysine 150. The segment at 235–269 adopts an FPG-type zinc-finger fold; that stretch reads QVYGRKGEPCRVCGTPIAATKHAQRATFYCRHCQK. Catalysis depends on arginine 259, which acts as the Proton donor; for delta-elimination activity.

The protein belongs to the FPG family. In terms of assembly, monomer. Requires Zn(2+) as cofactor.

The enzyme catalyses Hydrolysis of DNA containing ring-opened 7-methylguanine residues, releasing 2,6-diamino-4-hydroxy-5-(N-methyl)formamidopyrimidine.. It carries out the reaction 2'-deoxyribonucleotide-(2'-deoxyribose 5'-phosphate)-2'-deoxyribonucleotide-DNA = a 3'-end 2'-deoxyribonucleotide-(2,3-dehydro-2,3-deoxyribose 5'-phosphate)-DNA + a 5'-end 5'-phospho-2'-deoxyribonucleoside-DNA + H(+). Involved in base excision repair of DNA damaged by oxidation or by mutagenic agents. Acts as a DNA glycosylase that recognizes and removes damaged bases. Has a preference for oxidized purines, such as 7,8-dihydro-8-oxoguanine (8-oxoG). Has AP (apurinic/apyrimidinic) lyase activity and introduces nicks in the DNA strand. Cleaves the DNA backbone by beta-delta elimination to generate a single-strand break at the site of the removed base with both 3'- and 5'-phosphates. The sequence is that of Formamidopyrimidine-DNA glycosylase from Salmonella paratyphi B (strain ATCC BAA-1250 / SPB7).